We begin with the raw amino-acid sequence, 66 residues long: DNA gyrase inhibitor YacG (66 aa).

Positions 10, 13, 29, and 33 each coordinate Zn(2+). Positions 46 to 66 are disordered; the sequence is KRIPSDVQITDSDEWSDETRY. Residues 56–66 are compositionally biased toward acidic residues; the sequence is DSDEWSDETRY.

It belongs to the DNA gyrase inhibitor YacG family. As to quaternary structure, interacts with GyrB. Zn(2+) is required as a cofactor.

Functionally, inhibits all the catalytic activities of DNA gyrase by preventing its interaction with DNA. Acts by binding directly to the C-terminal domain of GyrB, which probably disrupts DNA binding by the gyrase. The sequence is that of DNA gyrase inhibitor YacG from Sodalis glossinidius (strain morsitans).